The primary structure comprises 251 residues: MSPARITDFSPGKPRKALLCIHGAGCSAAIFRVQISKLRVALKNEFEFVYATAPFSSSPGPGVLPVFQGMGPYYTWFQKHHDAVTNTTTPTVGDRVAAVIGPVQKTVQDWSITNPQAPIVGIVAFSEGALVATLLLHQQQMGKLPWFPKMSIAVLICCFYSDEARDYMRAEAQDDDDKLIINVPTLHLHGRQDFALQGSRQMVETHYLPQNADVLEFQGKHNFPNRPSDVQETVKRFQQLYQKVKMSGSFV.

Residues serine 126, aspartate 193, and histidine 221 each act as charge relay system in the active site.

The protein belongs to the LovG family.

It carries out the reaction dihydro-ML-236C-[compactin nonaketide synthase] + H2O = holo-[compactin nonaketide synthase] + dihydro-ML-236C carboxylate + H(+). It participates in polyketide biosynthesis. Its function is as follows. Esterase; part of the gene cluster that mediates the biosynthesis of compactin, also known as mevastatin or ML-236B, and which acts as a potent competitive inhibitor of HMG-CoA reductase. Compactin biosynthesis is performed in two stages. The first stage is catalyzed by the nonaketide synthase mlcA, which belongs to type I polyketide synthases and catalyzes the iterative nine-step formation of the polyketide. This PKS stage is completed by the action of dehydrogenase mlcG, which catalyzes the NADPH-dependent reduction of the unsaturated tetra-, penta- and heptaketide intermediates that arise during the mlcA-mediated biosynthesis of the nonaketide chain and leads to dihydro-ML-236C carboxylate. Covalently bound dihydro-ML-236C carboxylate is released from mlcA by the mlcF esterase. Conversion of dihydro-ML-236C carboxylate into ML-236A carboxylate is subsequently performed with the participation of molecular oxygen and P450 monoogygenase mlcC. Finally, mlcH performs the conversion of ML-236A carboxylate to ML-236B/compactin carboxylate through the addition of the side-chain diketide moiety produced by the diketide synthase mlcB. This is Esterase mlcF from Penicillium citrinum.